We begin with the raw amino-acid sequence, 124 residues long: Small ribosomal subunit protein uS12 (124 aa).

At D89 the chain carries 3-methylthioaspartic acid.

It belongs to the universal ribosomal protein uS12 family. In terms of assembly, part of the 30S ribosomal subunit. Contacts proteins S8 and S17. May interact with IF1 in the 30S initiation complex.

In terms of biological role, with S4 and S5 plays an important role in translational accuracy. Interacts with and stabilizes bases of the 16S rRNA that are involved in tRNA selection in the A site and with the mRNA backbone. Located at the interface of the 30S and 50S subunits, it traverses the body of the 30S subunit contacting proteins on the other side and probably holding the rRNA structure together. The combined cluster of proteins S8, S12 and S17 appears to hold together the shoulder and platform of the 30S subunit. This chain is Small ribosomal subunit protein uS12, found in Shewanella piezotolerans (strain WP3 / JCM 13877).